A 741-amino-acid chain; its full sequence is Prestin (741 aa).

At Met1–Tyr79 the chain is on the cytoplasmic side. A helical membrane pass occupies residues Val80 to Ala105. Residues Ala106–Pro109 lie on the Extracellular side of the membrane. A helical membrane pass occupies residues Val110–Phe125. Topologically, residues Phe126–Phe137 are cytoplasmic. A helical transmembrane segment spans residues Ala138–Val147. Over Ala148–Val178 the chain is Extracellular. Positions Ile158–Thr168 match the Involved in motor function motif. Residues Asn163 and Asn166 are each glycosylated (N-linked (GlcNAc...) asparagine). A run of 2 helical transmembrane segments spans residues Ala179 to Pro208 and Leu209 to Phe230. The Extracellular portion of the chain corresponds to Gly231–Val243. The segment at residues Val244–Val248 is an intramembrane region (helical). At Ala249–Ser261 the chain is on the extracellular side. The chain crosses the membrane as a helical span at residues Leu262 to Lys283. Residues Glu284–Pro291 lie on the Cytoplasmic side of the membrane. The helical transmembrane segment at Leu292–Ile303 threads the bilayer. Residues Ser304–Leu338 are Extracellular-facing. The helical transmembrane segment at Val339–Leu361 threads the bilayer. Residues Ala362–Asp370 lie on the Cytoplasmic side of the membrane. The chain crosses the membrane as a helical span at residues Gly371–Phe388. Topologically, residues Gln389–Ser396 are extracellular. A helical transmembrane segment spans residues Leu397–Thr406. Residue Ser398 coordinates salicylate. Residues Gly407–Thr410 are Cytoplasmic-facing. The chain crosses the membrane as a helical span at residues Gln411–Gly429. The Extracellular segment spans residues Phe430–Pro436. The helical transmembrane segment at Gln437 to Pro459 threads the bilayer. Topologically, residues Phe460 to Ile467 are cytoplasmic. A helical transmembrane segment spans residues Glu468 to Gly483. A topological domain (extracellular) is located at residue Leu484. The helical transmembrane segment at Asp485 to Thr498 threads the bilayer. The Cytoplasmic portion of the chain corresponds to Val499–Ala741. An extended region for STAS domain region spans residues Ser505–Ala718. One can recognise an STAS domain in the interval Ala525 to Ser713. The disordered stretch occupies residues Ala718–Ala741. Positions Glu721–Gln730 are enriched in low complexity.

This sequence belongs to the SLC26A/SulP transporter (TC 2.A.53) family. Homodimer. Interacts (via STAS domain) with CALM; this interaction is calcium-dependent and the STAS domain interacts with only one lobe of CALM which is an elongated conformation.

The protein localises to the cell membrane. The catalysed reaction is 2 hydrogencarbonate(in) + chloride(out) = 2 hydrogencarbonate(out) + chloride(in). Voltage-sensitive motor protein that drives outer hair cell (OHC) electromotility (eM) and participates in sound amplification in the hearing organ. Converts changes in the transmembrane electric potential into mechanical displacements resulting in the coupling of its expansion to movement of a charged voltage sensor across the lipid membrane. The nature of the voltage sensor is not completely clear, and two models compete. In the first model, acts as an incomplete transporter where intracellular chloride anion acts as extrinsic voltage sensor that drives conformational change in the protein which is sufficient to produce a length change in the plane of the membrane and hence in the length of the OHC. The second model in which multiple charged amino acid residues are distributed at the intracellular and extracellular membrane interfaces that form an intrinsic voltage sensor, whose movement produces the non-linear capacitance (NLC). However, the effective voltage sensor may be the result of a hybrid voltage sensor assembled from intrinsic charge (charged residues) and extrinsic charge (bound anion). Notably, binding of anions to the anion-binding pocket partially neutralizes the intrinsic positive charge rather than to form an electrically negative sensor, therefore remaining charge may serve as voltage sensor that, after depolarization, moves from down (expanded state) to up (contracted) conformation, which is accompanied by an eccentric contraction of the intermembrane cross-sectional area of the protein as well as a major increase in the hydrophobic thickness of the protein having as consequences the plasma membrane thickening and the cell contraction after membrane depolarization. The anion-binding pocket transits from the inward-open (Down) state, where it is exposed toward the intracellular solvent in the absence of anion, to the occluded (Up) state upon anion binding. Salicylate competes for the anion-binding site and inhibits the voltage-sensor movement, and therefore inhibits the charge transfer and electromotility by displacing Cl(-) from the anion-binding site and by preventing the structural transitions to the contracted state. In addition, can act as a weak Cl(-)/HCO3 (-) antiporter across the cell membrane and so regulate the intracellular pH of the outer hair cells (OHCs), while firstly found as being unable to mediate electrogenic anion transport. Moreover, supports a role in cardiac mechanical amplification serving as an elastic element to enhance the actomyosin- based sarcomere contraction system. This chain is Prestin, found in Tursiops truncatus (Atlantic bottle-nosed dolphin).